The sequence spans 456 residues: Bifunctional protein GlmU (456 aa).

Positions 1–228 are pyrophosphorylase; the sequence is MKLKAIILAA…YEDIMAVNSR (228 aa). UDP-N-acetyl-alpha-D-glucosamine-binding positions include 8-11, lysine 22, glutamine 72, 77-78, 99-101, glycine 138, glutamate 153, asparagine 168, and asparagine 226; these read LAAG, GT, and YGD. Aspartate 101 is a Mg(2+) binding site. A Mg(2+)-binding site is contributed by asparagine 226. Residues 229–249 form a linker region; that stretch reads EQLAEVEEVMQRRIVKKHMEA. An N-acetyltransferase region spans residues 250-456; the sequence is GVTFIDPQST…WVARKGVGKK (207 aa). Residues arginine 331 and lysine 349 each coordinate UDP-N-acetyl-alpha-D-glucosamine. Histidine 361 serves as the catalytic Proton acceptor. Residues tyrosine 364 and asparagine 375 each coordinate UDP-N-acetyl-alpha-D-glucosamine. Residues 384–385, serine 403, serine 421, and arginine 438 contribute to the acetyl-CoA site; that span reads NY.

It in the N-terminal section; belongs to the N-acetylglucosamine-1-phosphate uridyltransferase family. The protein in the C-terminal section; belongs to the transferase hexapeptide repeat family. Homotrimer. The cofactor is Mg(2+).

The protein resides in the cytoplasm. It carries out the reaction alpha-D-glucosamine 1-phosphate + acetyl-CoA = N-acetyl-alpha-D-glucosamine 1-phosphate + CoA + H(+). The enzyme catalyses N-acetyl-alpha-D-glucosamine 1-phosphate + UTP + H(+) = UDP-N-acetyl-alpha-D-glucosamine + diphosphate. Its pathway is nucleotide-sugar biosynthesis; UDP-N-acetyl-alpha-D-glucosamine biosynthesis; N-acetyl-alpha-D-glucosamine 1-phosphate from alpha-D-glucosamine 6-phosphate (route II): step 2/2. It functions in the pathway nucleotide-sugar biosynthesis; UDP-N-acetyl-alpha-D-glucosamine biosynthesis; UDP-N-acetyl-alpha-D-glucosamine from N-acetyl-alpha-D-glucosamine 1-phosphate: step 1/1. It participates in bacterial outer membrane biogenesis; LPS lipid A biosynthesis. In terms of biological role, catalyzes the last two sequential reactions in the de novo biosynthetic pathway for UDP-N-acetylglucosamine (UDP-GlcNAc). The C-terminal domain catalyzes the transfer of acetyl group from acetyl coenzyme A to glucosamine-1-phosphate (GlcN-1-P) to produce N-acetylglucosamine-1-phosphate (GlcNAc-1-P), which is converted into UDP-GlcNAc by the transfer of uridine 5-monophosphate (from uridine 5-triphosphate), a reaction catalyzed by the N-terminal domain. This chain is Bifunctional protein GlmU, found in Alkaliphilus metalliredigens (strain QYMF).